The chain runs to 294 residues: Elongation factor Ts (294 aa).

Positions 79-82 are involved in Mg(2+) ion dislocation from EF-Tu; sequence TDFV.

This sequence belongs to the EF-Ts family.

The protein resides in the cytoplasm. In terms of biological role, associates with the EF-Tu.GDP complex and induces the exchange of GDP to GTP. It remains bound to the aminoacyl-tRNA.EF-Tu.GTP complex up to the GTP hydrolysis stage on the ribosome. In Geobacillus kaustophilus (strain HTA426), this protein is Elongation factor Ts (tsf).